The following is a 279-amino-acid chain: Protein BASIC PENTACYSTEINE2 (279 aa).

The segment at T126–P167 is disordered. The span at S152–N161 shows a compositional bias: low complexity.

Belongs to the BBR/BPC family. Expressed in seedlings, leaves and pistils. Detected in the base of flowers and tips of carpels, in sepal and petal vasculature, in pollen grains, in young rosette, in the lateral and tip of primary roots, and in ovule at the exception of the outer integument.

The protein resides in the nucleus. Transcriptional regulator that specifically binds to GA-rich elements (GAGA-repeats) present in regulatory sequences of genes involved in developmental processes. The sequence is that of Protein BASIC PENTACYSTEINE2 from Arabidopsis thaliana (Mouse-ear cress).